The chain runs to 285 residues: Acetylglutamate kinase (285 aa).

Residues 55-56, R77, and N171 contribute to the substrate site; that span reads GG.

This sequence belongs to the acetylglutamate kinase family. ArgB subfamily.

Its subcellular location is the cytoplasm. It catalyses the reaction N-acetyl-L-glutamate + ATP = N-acetyl-L-glutamyl 5-phosphate + ADP. It functions in the pathway amino-acid biosynthesis; L-arginine biosynthesis; N(2)-acetyl-L-ornithine from L-glutamate: step 2/4. Its function is as follows. Catalyzes the ATP-dependent phosphorylation of N-acetyl-L-glutamate. The polypeptide is Acetylglutamate kinase (Chlorobaculum tepidum (strain ATCC 49652 / DSM 12025 / NBRC 103806 / TLS) (Chlorobium tepidum)).